A 198-amino-acid chain; its full sequence is Auxin-binding protein 1 (198 aa).

The signal sequence occupies residues 1 to 33; the sequence is MIVLSVGSASSSPIVVVFSVALLLFYFSETSLG. A disulfide bridge links cysteine 36 with cysteine 189. 3 residues coordinate Zn(2+): histidine 92, histidine 94, and glutamate 98. A glycan (N-linked (GlcNAc...) asparagine) is linked at asparagine 130. Residue histidine 141 participates in Zn(2+) binding. The Prevents secretion from ER signature appears at 195–198; it reads KDEL.

In terms of assembly, homodimer. May interact with the GPI-anchored plasma membrane protein SKU5 and its family members. Interacts with TMK1 (via extracellular domain). Post-translationally, glycosylated. In terms of processing, ubiquitinated by RMA2, leading to proteasomal degradation.

It localises to the endoplasmic reticulum lumen. It is found in the cell membrane. In terms of biological role, auxin receptor that controls cell elongation and cell division. Involved in embryonic morphogenesis. Acts on the cell cycle, endocycle, cell plate formation, and cell expansion and contributes to the control of auxin-related gene expression. Controls root meristem size and mediates auxin responsiveness. Involved in activation of ROP GTPases in response to auxin and regulation of clathrin-mediated endocytosis in roots. Acts as a positive factor in clathrin recruitment to the plasma membrane, thereby promoting endocytosis. Upon auxin binding, restricts the internalization of PIN proteins by inhibiting clathrin-mediated endocytosis. Promotes auxin-triggered phosphorylation status modulation of RAF-like kinases (e.g. RAF20 and RAF24). Involved in the regulation of polar auxin transport. Behaves as a negative regulator of the SCF(TIR1/AFB) signaling pathway, protecting AUX/IAA repressors from degradation. Regulates the expression of cell wall remodeling genes via an SCF(TIR1/AFB)-dependent pathway. Involved in the modulation of hemicellulose xyloglucan structure. Required for rapid auxin-mediated re-orientation of microtubules to regulate cell elongation in roots and dark-grown hypocotyls as well as asymmetric growth during gravitropic responses. Involved in the shade avoidance response. Forms with TMK1 a cell surface auxin perception complex that activates ROP signaling pathways. ABP1 sensing of auxin is important for the ABP1-TMK1 complex formation. Interacts functionally with phytochrome to regulate growth. The protein is Auxin-binding protein 1 of Arabidopsis thaliana (Mouse-ear cress).